The chain runs to 295 residues: Pyridoxal 5'-phosphate synthase subunit PdxS (295 aa).

A D-ribose 5-phosphate-binding site is contributed by Asp-25. The Schiff-base intermediate with D-ribose 5-phosphate role is filled by Lys-82. Gly-154 serves as a coordination point for D-ribose 5-phosphate. Residue Arg-166 participates in D-glyceraldehyde 3-phosphate binding. Residues Gly-215 and 236 to 237 contribute to the D-ribose 5-phosphate site; that span reads GS.

Belongs to the PdxS/SNZ family. As to quaternary structure, in the presence of PdxT, forms a dodecamer of heterodimers.

It catalyses the reaction aldehydo-D-ribose 5-phosphate + D-glyceraldehyde 3-phosphate + L-glutamine = pyridoxal 5'-phosphate + L-glutamate + phosphate + 3 H2O + H(+). It functions in the pathway cofactor biosynthesis; pyridoxal 5'-phosphate biosynthesis. Functionally, catalyzes the formation of pyridoxal 5'-phosphate from ribose 5-phosphate (RBP), glyceraldehyde 3-phosphate (G3P) and ammonia. The ammonia is provided by the PdxT subunit. Can also use ribulose 5-phosphate and dihydroxyacetone phosphate as substrates, resulting from enzyme-catalyzed isomerization of RBP and G3P, respectively. This is Pyridoxal 5'-phosphate synthase subunit PdxS from Haemophilus ducreyi (strain 35000HP / ATCC 700724).